The sequence spans 77 residues: TSC22 domain family protein 3 (77 aa).

Methionine 1 bears the N-acetylmethionine mark. Residues 19–40 are leucine-zipper; it reads LKEQIRELVEKNSQLERENTLL. Residues 41–77 form a disordered region; the sequence is KTLASPEQLEKFQSRLSPEEPAPETPEAPEAPGGSAV. The residue at position 45 (serine 45) is a Phosphoserine. The segment covering 68-77 has biased composition (low complexity); sequence APEAPGGSAV.

It belongs to the TSC-22/Dip/Bun family. In terms of assembly, can form homodimers, however it is likely to function as a monomer. Interacts with AP1 and NFKB1. Interacts with MYOD1. Interacts with HDAC1; this interaction affects HDAC1 activity on MYOG promoter and thus inhibits MYOD1 transcriptional activity.

The protein resides in the cytoplasm. It is found in the nucleus. In terms of biological role, protects T-cells from IL2 deprivation-induced apoptosis through the inhibition of FOXO3A transcriptional activity that leads to the down-regulation of the pro-apoptotic factor BCL2L11. In macrophages, plays a role in the anti-inflammatory and immunosuppressive effects of glucocorticoids and IL10. In T-cells, inhibits anti-CD3-induced NFKB1 nuclear translocation. In vitro, suppresses AP1 and NFKB1 DNA-binding activities. Inhibits myogenic differentiation and mediates anti-myogenic effects of glucocorticoids by binding and regulating MYOD1 and HDAC1 transcriptional activity resulting in reduced expression of MYOG. This is TSC22 domain family protein 3 (TSC22D3) from Sus scrofa (Pig).